We begin with the raw amino-acid sequence, 473 residues long: MKTDTPSLETPQAARLRRRQLIRQLLERDKTPLAILFMAAVVGTLVGLAAVAFDKGVAWLQNQRMGALVHTADNYPLLLTVAFLCSAVLAMFGYFLVRKYAPEAGGSGIPEIEGALEDQRPVRWWRVLPVKFFGGLGTLGGGMVLGREGPTVQIGGNIGRMVLDIFRLKGDEARHTLLATGAAAGLAAAFNAPLAGILFIIEEMRPQFRYTLISIKAVFIGVIMSTIMYRIFNHEVALIDVGKLSDAPLNTLWLYLILGIIFGIFGPIFNKWVLGMQDLLHRVHGGNITKWILMGGAIGGLCGLLGFVAPATSGGGFNLIPIATAGNFSMGMLVFIFVARVITTLLCFSSGAPGGIFAPMLALGTVLGTAFGMVAVELFPQYHLEAGTFAIAGMGALLAASIRAPLTGIILVLEMTDNYQLILPMIITGLGATLLAQFTGGKPLYSAILARTLAKQEAEQLARSKAASASENT.

Topologically, residues 1-32 (MKTDTPSLETPQAARLRRRQLIRQLLERDKTP) are cytoplasmic. Residues 33 to 69 (LAILFMAAVVGTLVGLAAVAFDKGVAWLQNQRMGALV) traverse the membrane as a helical segment. Residues 70-76 (HTADNYP) lie on the Periplasmic side of the membrane. Residues 77–100 (LLLTVAFLCSAVLAMFGYFLVRKY) form a helical membrane-spanning segment. The Selectivity filter part_1 signature appears at 106-110 (GSGIP). Serine 107 provides a ligand contact to chloride. The segment at residues 109–116 (IPEIEGAL) is an intramembrane region (helical). Topologically, residues 117–123 (EDQRPVR) are cytoplasmic. 2 consecutive transmembrane segments (helical) span residues 124–141 (WWRVLPVKFFGGLGTLGG) and 148–166 (EGPTVQIGGNIGRMVLDIF). Positions 146 to 150 (GREGP) match the Selectivity filter part_2 motif. At 167–176 (RLKGDEARHT) the chain is on the cytoplasmic side. 2 consecutive intramembrane regions (helical) follow at residues 177–189 (LLATGAAAGLAAA) and 193–201 (PLAGILFII). Residues 202–214 (EEMRPQFRYTLIS) are Cytoplasmic-facing. Residues 215–232 (IKAVFIGVIMSTIMYRIF) form a helical membrane-spanning segment. Over 233–252 (NHEVALIDVGKLSDAPLNTL) the chain is Periplasmic. The chain crosses the membrane as a helical span at residues 253–281 (WLYLILGIIFGIFGPIFNKWVLGMQDLLH). Residues 282–287 (RVHGGN) lie on the Cytoplasmic side of the membrane. A helical transmembrane segment spans residues 288-309 (ITKWILMGGAIGGLCGLLGFVA). Residues 310-329 (PATSGGGFNLIPIATAGNFS) are Periplasmic-facing. The next 2 helical transmembrane spans lie at 330 to 349 (MGMLVFIFVARVITTLLCFS) and 355 to 376 (GIFAPMLALGTVLGTAFGMVAV). The Selectivity filter part_3 signature appears at 355–359 (GIFAP). Chloride is bound by residues isoleucine 356 and phenylalanine 357. Over 377-386 (ELFPQYHLEA) the chain is Periplasmic. Residues 387 to 401 (GTFAIAGMGALLAAS) constitute an intramembrane region (helical). The segment at residues 402–404 (IRA) is an intramembrane region (note=Loop between two helices). The helical intramembrane region spans 405–416 (PLTGIILVLEMT). Positions 417–421 (DNYQL) form an intramembrane region, note=Loop between two helices. The helical transmembrane segment at 422–438 (ILPMIITGLGATLLAQF) threads the bilayer. Over 439-473 (TGGKPLYSAILARTLAKQEAEQLARSKAASASENT) the chain is Cytoplasmic. Position 445 (tyrosine 445) interacts with chloride.

The protein belongs to the chloride channel (TC 2.A.49) family. ClcA subfamily. Homodimer.

It localises to the cell inner membrane. The enzyme catalyses 2 chloride(in) + H(+)(out) = 2 chloride(out) + H(+)(in). In terms of biological role, proton-coupled chloride transporter. Functions as antiport system and exchanges two chloride ions for 1 proton. Probably acts as an electrical shunt for an outwardly-directed proton pump that is linked to amino acid decarboxylation, as part of the extreme acid resistance (XAR) response. The protein is H(+)/Cl(-) exchange transporter ClcA of Escherichia coli O9:H4 (strain HS).